Consider the following 806-residue polypeptide: Glycerol-3-phosphate acyltransferase (806 aa).

Positions 305–310 match the HXXXXD motif motif; it reads CHRSHM.

Belongs to the GPAT/DAPAT family.

The protein localises to the cell inner membrane. It catalyses the reaction sn-glycerol 3-phosphate + an acyl-CoA = a 1-acyl-sn-glycero-3-phosphate + CoA. It functions in the pathway phospholipid metabolism; CDP-diacylglycerol biosynthesis; CDP-diacylglycerol from sn-glycerol 3-phosphate: step 1/3. This Escherichia fergusonii (strain ATCC 35469 / DSM 13698 / CCUG 18766 / IAM 14443 / JCM 21226 / LMG 7866 / NBRC 102419 / NCTC 12128 / CDC 0568-73) protein is Glycerol-3-phosphate acyltransferase.